A 109-amino-acid chain; its full sequence is Protein reprimo (109 aa).

Asn7 and Asn18 each carry an N-linked (GlcNAc...) asparagine glycan. Residues Val56–Leu76 traverse the membrane as a helical segment. Ser98 is modified (phosphoserine).

Belongs to the reprimo family.

The protein resides in the cytoplasm. Its subcellular location is the membrane. May be involved in the regulation of p53-dependent G2 arrest of the cell cycle. Seems to induce cell cycle arrest by inhibiting CDK1 activity and nuclear translocation of the CDC2 cyclin B1 complex. The polypeptide is Protein reprimo (RPRM) (Homo sapiens (Human)).